The primary structure comprises 484 residues: Aldehyde dehydrogenase family 3 member A2 (484 aa).

The Cytoplasmic portion of the chain corresponds to 1 to 463; that stretch reads MERQVLRLRQ…FLLKQFNKGR (463 aa). Residue 185–190 participates in NAD(+) binding; it reads GNTAVG. Residues glutamate 207 and cysteine 241 contribute to the active site. Serine 293 is modified (phosphoserine). Residues 464–484 traverse the membrane as a helical segment; the sequence is LGMLLFVCLVAVAAVIVKDQL. Residues 481–484 carry the Prevents secretion from ER motif; sequence KDQL.

It belongs to the aldehyde dehydrogenase family. As to quaternary structure, homodimer.

Its subcellular location is the membrane. It is found in the microsome membrane. The protein resides in the endoplasmic reticulum membrane. It catalyses the reaction an aldehyde + NAD(+) + H2O = a carboxylate + NADH + 2 H(+). It carries out the reaction a fatty aldehyde + NAD(+) + H2O = a fatty acid + NADH + 2 H(+). The enzyme catalyses hexadecanoate + NADH + 2 H(+) = hexadecanal + NAD(+) + H2O. The catalysed reaction is octanal + NAD(+) + H2O = octanoate + NADH + 2 H(+). It catalyses the reaction (2E)-hexadecenal + NAD(+) + H2O = (E)-hexadec-2-enoate + NADH + 2 H(+). It carries out the reaction 22-oxodocosanoate + NAD(+) + H2O = docosanedioate + NADH + 2 H(+). The enzyme catalyses 2,6,10,14-tetramethylpentadecanal + NAD(+) + H2O = 2,6,10,14-tetramethylpentadecanoate + NADH + 2 H(+). The catalysed reaction is octadecanal + NAD(+) + H2O = octadecanoate + NADH + 2 H(+). It catalyses the reaction dodecanoate + NADH + 2 H(+) = dodecanal + NAD(+) + H2O. It carries out the reaction decanal + NAD(+) + H2O = decanoate + NADH + 2 H(+). The enzyme catalyses tetradecanal + NAD(+) + H2O = tetradecanoate + NADH + 2 H(+). The catalysed reaction is heptanal + NAD(+) + H2O = heptanoate + NADH + 2 H(+). It catalyses the reaction (2E,6E)-farnesal + NAD(+) + H2O = (2E,6E)-farnesoate + NADH + 2 H(+). In terms of biological role, catalyzes the oxidation of medium and long-chain aliphatic aldehydes to fatty acids. Active on a variety of saturated and unsaturated aliphatic aldehydes between 6 and 24 carbons in length. Responsible for conversion of the sphingosine 1-phosphate (S1P) degradation product hexadecenal to hexadecenoic acid. This is Aldehyde dehydrogenase family 3 member A2 (Aldh3a2) from Mus musculus (Mouse).